Here is a 205-residue protein sequence, read N- to C-terminus: Recombination protein RecR (205 aa).

A C4-type zinc finger spans residues 59 to 74 (CSVCFHLSAEPVCEVC). Positions 82–181 (GTLCVVADSR…KVTRIAFGLP (100 aa)) constitute a Toprim domain.

The protein belongs to the RecR family.

Functionally, may play a role in DNA repair. It seems to be involved in an RecBC-independent recombinational process of DNA repair. It may act with RecF and RecO. The polypeptide is Recombination protein RecR (Cyanothece sp. (strain PCC 7425 / ATCC 29141)).